We begin with the raw amino-acid sequence, 181 residues long: Acireductone dioxygenase (181 aa).

Fe(2+)-binding residues include H97, H99, E103, and H141. H97, H99, E103, and H141 together coordinate Ni(2+).

The protein belongs to the acireductone dioxygenase (ARD) family. In terms of assembly, monomer. Fe(2+) is required as a cofactor. Requires Ni(2+) as cofactor.

The catalysed reaction is 1,2-dihydroxy-5-(methylsulfanyl)pent-1-en-3-one + O2 = 3-(methylsulfanyl)propanoate + CO + formate + 2 H(+). It catalyses the reaction 1,2-dihydroxy-5-(methylsulfanyl)pent-1-en-3-one + O2 = 4-methylsulfanyl-2-oxobutanoate + formate + 2 H(+). Its pathway is amino-acid biosynthesis; L-methionine biosynthesis via salvage pathway; L-methionine from S-methyl-5-thio-alpha-D-ribose 1-phosphate: step 5/6. In terms of biological role, catalyzes 2 different reactions between oxygen and the acireductone 1,2-dihydroxy-3-keto-5-methylthiopentene (DHK-MTPene) depending upon the metal bound in the active site. Fe-containing acireductone dioxygenase (Fe-ARD) produces formate and 2-keto-4-methylthiobutyrate (KMTB), the alpha-ketoacid precursor of methionine in the methionine recycle pathway. Ni-containing acireductone dioxygenase (Ni-ARD) produces methylthiopropionate, carbon monoxide and formate, and does not lie on the methionine recycle pathway. The protein is Acireductone dioxygenase of Pseudomonas syringae pv. syringae (strain B728a).